The chain runs to 1045 residues: Tyrosine-protein kinase-like otk (1045 aa).

Positions 1–25 (MPIVMDMNMLLMLSLAFTVMAPASA) are cleaved as a signal peptide. Ig-like C2-type domains are found at residues 26–116 (SSSR…AKLS), 115–200 (LSVI…RVMS), 260–373 (PEGL…APVN), 376–469 (PGAL…VAIN), and 474–564 (PRFS…VRLL). The Extracellular portion of the chain corresponds to 26–587 (SSSRFTQPPQ…AGDGFLVTRA (562 aa)). 4 disulfide bridges follow: C49-C97, C139-C189, C285-C362, and C406-C453. 8 N-linked (GlcNAc...) asparagine glycosylation sites follow: N344, N424, N435, N442, N450, N463, N518, and N530. Cysteines 496 and 548 form a disulfide. The helical transmembrane segment at 588–608 (VLITMTVALAYIVLVVGLMLW) threads the bilayer. At 609-1045 (CRYRRQARKA…LSKAMQAAEK (437 aa)) the chain is on the cytoplasmic side. The tract at residues 628-676 (AGGDQAESGKNTEQEPCLSKQRNGHGKSRTAANGDAQKSDDTACSQQSK) is disordered. S681 bears the Phosphoserine mark. Positions 695–1040 (LSELIQIGRG…QLGAALSKAM (346 aa)) constitute a Protein kinase; inactive domain. The tract at residues 722-790 (ASPSDKDADT…QPQEQAQSES (69 aa)) is disordered. Residues 725-736 (SDKDADTEKQHS) show a composition bias toward basic and acidic residues. A compositionally biased stretch (gly residues) spans 743–752 (GASGASGCGS). The segment covering 771–782 (DDIEEIKEEEQP) has biased composition (acidic residues).

This sequence belongs to the protein kinase superfamily. Tyr protein kinase family. Insulin receptor subfamily. In terms of assembly, interacts with plexA; component of a receptor complex that mediates the repulsive signaling in response to Semaphorin ligands.

It is found in the cell membrane. Its function is as follows. Acts as a calcium-dependent, homophilic cell adhesion molecule that regulates neural recognition during the development of the nervous system. Component of the repulsive Plexin signaling response to regulate motor axon guidance at the embryonic stage. Also component of a receptor complex that is required in the adult visual system to innervate the lamina layer; specific targeting of R1-R6 axons. This Drosophila mojavensis (Fruit fly) protein is Tyrosine-protein kinase-like otk.